Consider the following 255-residue polypeptide: Large ribosomal subunit protein uL2 (255 aa).

The interval 211-235 (PHGGGNHQHVGHATTTKRDDPAGKK) is disordered.

It belongs to the universal ribosomal protein uL2 family.

In Dictyostelium discoideum (Social amoeba), this protein is Large ribosomal subunit protein uL2 (rpl8).